Here is a 79-residue protein sequence, read N- to C-terminus: Defensin-1 (79 aa).

Residues Met1–Ala23 form the signal peptide. Cystine bridges form between Cys42–Cys69, Cys55–Cys75, and Cys59–Cys77.

It belongs to the invertebrate defensin family. Type 1 subfamily.

Its subcellular location is the secreted. This is Defensin-1 (SMD1) from Stomoxys calcitrans (Stable fly).